The sequence spans 135 residues: Sex-regulated protein janus-A (135 aa).

K37 serves as a coordination point for substrate. H63 acts as the Proton acceptor in catalysis. S104–G106 serves as a coordination point for substrate.

Belongs to the janus family. Somatic and germline cells. Isoform B is expressed in both sexes and in somatic and germ line cells. Isoform A is expressed in males and is germ line specific.

Its function is as follows. JanA and janB regulate somatic sex differentiation. In Drosophila melanogaster (Fruit fly), this protein is Sex-regulated protein janus-A (janA).